Reading from the N-terminus, the 783-residue chain is B-cell scaffold protein with ankyrin repeats (783 aa).

The tract at residues M1–L154 is interaction with ITPR2. The TIR domain occupies N25 to I153. The DBB domain maps to V199–L326. ANK repeat units lie at residues E341–A370 and D377–R407. Disordered regions lie at residues F422 to Q521, M538 to E586, S604 to E624, and R641 to D670. Basic and acidic residues predominate over residues R444–S479. A compositionally biased stretch (pro residues) spans H505–P515. Residues A549 to E565 are compositionally biased toward basic and acidic residues. A compositionally biased stretch (acidic residues) spans A566–E586. A compositionally biased stretch (pro residues) spans P610–I620. Over residues R641–M660 the composition is skewed to basic and acidic residues. Y649 is modified (phosphotyrosine).

As to quaternary structure, interacts with LYN, ITPR1 and ITPR2. Phosphorylated on tyrosines upon BCR activation. In terms of tissue distribution, specifically expressed in spleen. Highly expressed in immature B-cells and recirculating B-cells, and at low levels in pro-B and pre-B cells.

Involved in B-cell receptor (BCR)-induced Ca(2+) mobilization from intracellular stores. Promotes Lyn-mediated phosphorylation of IP3 receptors 1 and 2. This is B-cell scaffold protein with ankyrin repeats (Bank1) from Mus musculus (Mouse).